Reading from the N-terminus, the 177-residue chain is R-phycoerythrin beta chain (177 aa).

The phycourobilin site is built by Cys-50 and Cys-61. Position 72 is an N4-methylasparagine (Asn-72). (2R,3E)-phycoerythrobilin contacts are provided by Cys-82 and Cys-158.

It belongs to the phycobiliprotein family. As to quaternary structure, heterodimer of an alpha and a beta chain. In terms of processing, contains two covalently linked phycoerythrobilin chromophores and one covalently linked phycourobilin chromophore.

Its subcellular location is the plastid. It is found in the chloroplast thylakoid membrane. Light-harvesting photosynthetic bile pigment-protein from the phycobiliprotein complex. This chain is R-phycoerythrin beta chain (cpeB), found in Porphyra purpurea (Red seaweed).